The sequence spans 423 residues: Phosphoribosylamine--glycine ligase (423 aa).

In terms of domain architecture, ATP-grasp spans 107–314; the sequence is KAFMAKYNIP…LSDLVEAAID (208 aa). 133–194 is an ATP binding site; that stretch reads VNQKGAPIVI…EDFLQGEEAS (62 aa). Mg(2+) is bound by residues Glu284 and Asn286.

It belongs to the GARS family. Requires Mg(2+) as cofactor. Mn(2+) is required as a cofactor.

The enzyme catalyses 5-phospho-beta-D-ribosylamine + glycine + ATP = N(1)-(5-phospho-beta-D-ribosyl)glycinamide + ADP + phosphate + H(+). It functions in the pathway purine metabolism; IMP biosynthesis via de novo pathway; N(1)-(5-phospho-D-ribosyl)glycinamide from 5-phospho-alpha-D-ribose 1-diphosphate: step 2/2. The chain is Phosphoribosylamine--glycine ligase from Neisseria meningitidis serogroup B (strain ATCC BAA-335 / MC58).